The primary structure comprises 202 residues: IMP cyclohydrolase (202 aa).

The interval 29–52 (VQRDGTVTVEPTPDAPETDNPYIS) is disordered.

Belongs to the archaeal IMP cyclohydrolase family.

The catalysed reaction is IMP + H2O = 5-formamido-1-(5-phospho-D-ribosyl)imidazole-4-carboxamide. It functions in the pathway purine metabolism; IMP biosynthesis via de novo pathway; IMP from 5-formamido-1-(5-phospho-D-ribosyl)imidazole-4-carboxamide: step 1/1. Its function is as follows. Catalyzes the cyclization of 5-formylamidoimidazole-4-carboxamide ribonucleotide to IMP. The polypeptide is IMP cyclohydrolase (Haloarcula marismortui (strain ATCC 43049 / DSM 3752 / JCM 8966 / VKM B-1809) (Halobacterium marismortui)).